Here is a 2566-residue protein sequence, read N- to C-terminus: Highly reducing polyketide synthase verA (2566 aa).

A Ketosynthase family 3 (KS3) domain is found at 3-440; the sequence is PEPIAIIGTG…GTNAHAILES (438 aa). The tract at residues 35–61 is disordered; sequence VASEPPSTRFDNRSFYDPDPSHPGTTN. Residues 44 to 54 show a composition bias toward basic and acidic residues; the sequence is FDNRSFYDPDP. Active-site for beta-ketoacyl synthase activity residues include C176, H316, and H360. Positions 554 to 880 are malonyl-CoA:ACP transacylase (MAT) domain; it reads IFTGQGAQWP…IGLSNRGASG (327 aa). Residue S648 is the For malonyltransferase activity of the active site. The tract at residues 950–1081 is N-terminal hotdog fold; it reads HPLLGSLEAD…GKLLICWGNP (132 aa). Positions 950 to 1246 are dehydratase (DH) domain; sequence HPLLGSLEAD…EGVHISPLGP (297 aa). A PKS/mFAS DH domain is found at 950 to 1250; it reads HPLLGSLEAD…ISPLGPPDRQ (301 aa). The Proton acceptor; for dehydratase activity role is filled by H982. Residues 1096-1250 form a C-terminal hotdog fold region; the sequence is AGAVDIKDFY…ISPLGPPDRQ (155 aa). Catalysis depends on D1156, which acts as the Proton donor; for dehydratase activity. The methyltransferase (CMet) domain stretch occupies residues 1386-1581; sequence DVLSRFYKED…TGFGGIDTIT (196 aa). Residues 2127–2294 are ketoreductase (KR) domain; it reads KTYLLVGMTG…RRARNIVGSI (168 aa). The Carrier domain occupies 2411 to 2489; the sequence is EAAEIVAAGL…ALTADSVSKL (79 aa). The residue at position 2449 (S2449) is an O-(pantetheine 4'-phosphoryl)serine. The segment at 2505 to 2540 is disordered; the sequence is KDVSGLTSPPEVPSDASRSSVSSGMDEIVTPESPSF. Low complexity predominate over residues 2518–2527; it reads SDASRSSVSS.

Pantetheine 4'-phosphate serves as cofactor.

The protein operates within secondary metabolite biosynthesis; terpenoid biosynthesis. Its pathway is mycotoxin biosynthesis. Its function is as follows. Highly reducing polyketide synthase (HR-PKS); part of the gene cluster that mediates the biosynthesis of the neurotoxin verrucosidin, a methylated alpha-pyrone polyketide that inhibits oxidative phosphorylation in mitochondria and thereby causes neurological diseases. The carbon backbone of verrucosidin is synthesized by the HR-PKS verA, and further modified by the other verrucodidin cluster enzymes. The sequence is that of Highly reducing polyketide synthase verA from Penicillium polonicum.